A 300-amino-acid polypeptide reads, in one-letter code: MQALYDLPAPAKLNLFLHIIGRRADGYHLIESVFMLIDWCDTLHFECRADGAISRQDLGAPLPAADLSIRAAHALRAATGCRQGAHIGLLKRLPAQAGIGGGSSDAATTLLALNRLWGLGLSLSALEKIGVTLGADVPFFVRGRNARVAGIGEIITPLAHGQLPPACFAVVKPAAGLETKAIFSSPLLKRASGSATISGFAAADFGRDGDCYQDADFCRNDLQPVAQALCPEVTQAIEWLRARGLQGRMTGSGSAVFAQIPQAPDLGHVGDLGAAPEGWQVRVCENLMLHPLAGWAADED.

The active site involves K12. Position 94 to 104 (94 to 104 (PAQAGIGGGSS)) interacts with ATP. D136 is a catalytic residue.

It belongs to the GHMP kinase family. IspE subfamily.

The enzyme catalyses 4-CDP-2-C-methyl-D-erythritol + ATP = 4-CDP-2-C-methyl-D-erythritol 2-phosphate + ADP + H(+). Its pathway is isoprenoid biosynthesis; isopentenyl diphosphate biosynthesis via DXP pathway; isopentenyl diphosphate from 1-deoxy-D-xylulose 5-phosphate: step 3/6. Catalyzes the phosphorylation of the position 2 hydroxy group of 4-diphosphocytidyl-2C-methyl-D-erythritol. In Verminephrobacter eiseniae (strain EF01-2), this protein is 4-diphosphocytidyl-2-C-methyl-D-erythritol kinase.